A 427-amino-acid polypeptide reads, in one-letter code: Imidazolonepropionase (427 aa).

Fe(3+) contacts are provided by H81 and H83. 2 residues coordinate Zn(2+): H81 and H83. Residues R90, Y153, and H186 each contribute to the 4-imidazolone-5-propanoate site. Residue Y153 participates in N-formimidoyl-L-glutamate binding. H260 is a Fe(3+) binding site. H260 serves as a coordination point for Zn(2+). Residue E263 participates in 4-imidazolone-5-propanoate binding. Fe(3+) is bound at residue D335. D335 serves as a coordination point for Zn(2+). N-formimidoyl-L-glutamate-binding residues include N337 and G339. Position 340 (S340) interacts with 4-imidazolone-5-propanoate.

Belongs to the metallo-dependent hydrolases superfamily. HutI family. Requires Zn(2+) as cofactor. Fe(3+) serves as cofactor.

Its subcellular location is the cytoplasm. The catalysed reaction is 4-imidazolone-5-propanoate + H2O = N-formimidoyl-L-glutamate. Its pathway is amino-acid degradation; L-histidine degradation into L-glutamate; N-formimidoyl-L-glutamate from L-histidine: step 3/3. Functionally, catalyzes the hydrolytic cleavage of the carbon-nitrogen bond in imidazolone-5-propanoate to yield N-formimidoyl-L-glutamate. It is the third step in the universal histidine degradation pathway. The polypeptide is Imidazolonepropionase (Chloroflexus aggregans (strain MD-66 / DSM 9485)).